The primary structure comprises 241 residues: MRVLIEENYREMSKKAALLVASQVILKPDSVLGLATGSTPIGMYQELAEMYKEGEIDFSEVTTFNLDEYYNLPPEAPQSYHYYMKENFFKHVNIHPARTHIPDGMAGDVEAECQDYEEKIRRSGGIDLQILGIGPNGHIGFNEPDERLNVTTHLVDLTEETIQANSRFFDSPDDVPRKAISVGMATILKARRIILLASGRNKARAIKETVSGYVSTKVPASLLQTHPEVTLIIDKEAASLL.

Aspartate 67 serves as the catalytic Proton acceptor; for enolization step. Residue asparagine 136 is the For ring-opening step of the active site. Catalysis depends on histidine 138, which acts as the Proton acceptor; for ring-opening step. Catalysis depends on glutamate 143, which acts as the For ring-opening step.

It belongs to the glucosamine/galactosamine-6-phosphate isomerase family. NagB subfamily.

It carries out the reaction alpha-D-glucosamine 6-phosphate + H2O = beta-D-fructose 6-phosphate + NH4(+). It participates in amino-sugar metabolism; N-acetylneuraminate degradation; D-fructose 6-phosphate from N-acetylneuraminate: step 5/5. Functionally, catalyzes the reversible isomerization-deamination of glucosamine 6-phosphate (GlcN6P) to form fructose 6-phosphate (Fru6P) and ammonium ion. This Halothermothrix orenii (strain H 168 / OCM 544 / DSM 9562) protein is Glucosamine-6-phosphate deaminase.